Reading from the N-terminus, the 37-residue chain is Large ribosomal subunit protein bL36 (37 aa).

The protein belongs to the bacterial ribosomal protein bL36 family.

The protein is Large ribosomal subunit protein bL36 (rpmJ) of Geobacillus stearothermophilus (Bacillus stearothermophilus).